A 332-amino-acid polypeptide reads, in one-letter code: Divalent cation transporter CmaX (332 aa).

At 1-277 the chain is on the cytoplasmic side; it reads MQAYESGDER…MNRTMYLLGI (277 aa). The chain crosses the membrane as a helical span at residues 278–286; it reads ITGFFLPMS. Residues 287–307 lie on the Periplasmic side of the membrane; that stretch reads FVTGLLGINVGGIPGADAPHG. A helical transmembrane segment spans residues 308–323; that stretch reads FWLACLLIGGVATFQW. Topologically, residues 324-332 are cytoplasmic; that stretch reads WVFRRLRWL.

This sequence belongs to the CorA metal ion transporter (MIT) (TC 1.A.35) family. As to quaternary structure, homopentamer.

It is found in the cell inner membrane. It carries out the reaction Zn(2+)(in) = Zn(2+)(out). It catalyses the reaction Cd(2+)(in) = Cd(2+)(out). The catalysed reaction is Ni(2+)(in) = Ni(2+)(out). The enzyme catalyses Co(2+)(in) = Co(2+)(out). Functionally, transports divalent cations including Zn(2+), Cd(2+), Ni(2+) and Co(2+). The proton gradient has a small influence on transport suggesting that the transport is probably not proton-dependent. The protein is Divalent cation transporter CmaX of Pseudomonas aeruginosa (strain ATCC 15692 / DSM 22644 / CIP 104116 / JCM 14847 / LMG 12228 / 1C / PRS 101 / PAO1).